Here is a 314-residue protein sequence, read N- to C-terminus: Acetyl-coenzyme A carboxylase carboxyl transferase subunit alpha (314 aa).

In terms of domain architecture, CoA carboxyltransferase C-terminal spans glutamate 32–glutamate 289.

Belongs to the AccA family. Acetyl-CoA carboxylase is a heterohexamer composed of biotin carboxyl carrier protein (AccB), biotin carboxylase (AccC) and two subunits each of ACCase subunit alpha (AccA) and ACCase subunit beta (AccD).

The protein localises to the cytoplasm. It catalyses the reaction N(6)-carboxybiotinyl-L-lysyl-[protein] + acetyl-CoA = N(6)-biotinyl-L-lysyl-[protein] + malonyl-CoA. It participates in lipid metabolism; malonyl-CoA biosynthesis; malonyl-CoA from acetyl-CoA: step 1/1. In terms of biological role, component of the acetyl coenzyme A carboxylase (ACC) complex. First, biotin carboxylase catalyzes the carboxylation of biotin on its carrier protein (BCCP) and then the CO(2) group is transferred by the carboxyltransferase to acetyl-CoA to form malonyl-CoA. The sequence is that of Acetyl-coenzyme A carboxylase carboxyl transferase subunit alpha from Staphylococcus epidermidis (strain ATCC 12228 / FDA PCI 1200).